We begin with the raw amino-acid sequence, 91 residues long: Protein translocase subunit SecG (91 aa).

The next 2 helical transmembrane spans lie at 16–36 (HTFL…VVLL) and 71–91 (LTII…YLGM).

This sequence belongs to the SecG family. In terms of assembly, component of the Sec protein translocase complex. Heterotrimer consisting of SecY, SecE and SecG subunits. The heterotrimers can form oligomers, although 1 heterotrimer is thought to be able to translocate proteins. Interacts with SecDF, and other proteins may be involved. The channel interacts with SecA via subunit SecY. Also part of the accessory SecA2/SecY2 protein translocation apparatus required to export cell wall protein GspB.

Its subcellular location is the cell membrane. In terms of biological role, subunit of the protein translocation channel SecYEG. While not essential, it considerably increases the export efficiency of extracellular proteins. The chain is Protein translocase subunit SecG from Staphylococcus aureus (strain NCTC 8325 / PS 47).